Consider the following 385-residue polypeptide: Carbamoyl phosphate synthase small chain (385 aa).

Residues 1–196 (MEDALGQLAV…KLEKKKKFLF (196 aa)) form a CPSase region. L-glutamine-binding residues include S51, G245, and G247. The Glutamine amidotransferase type-1 domain occupies 197 to 384 (HIVVYDFGVK…IKLLNQVKFS (188 aa)). Catalysis depends on C273, which acts as the Nucleophile. L-glutamine-binding residues include L274, Q277, N315, and F318. Catalysis depends on residues H357 and E359.

It belongs to the CarA family. As to quaternary structure, composed of two chains; the small (or glutamine) chain promotes the hydrolysis of glutamine to ammonia, which is used by the large (or ammonia) chain to synthesize carbamoyl phosphate. Tetramer of heterodimers (alpha,beta)4.

It carries out the reaction hydrogencarbonate + L-glutamine + 2 ATP + H2O = carbamoyl phosphate + L-glutamate + 2 ADP + phosphate + 2 H(+). It catalyses the reaction L-glutamine + H2O = L-glutamate + NH4(+). The protein operates within amino-acid biosynthesis; L-arginine biosynthesis; carbamoyl phosphate from bicarbonate: step 1/1. It functions in the pathway pyrimidine metabolism; UMP biosynthesis via de novo pathway; (S)-dihydroorotate from bicarbonate: step 1/3. Small subunit of the glutamine-dependent carbamoyl phosphate synthetase (CPSase). CPSase catalyzes the formation of carbamoyl phosphate from the ammonia moiety of glutamine, carbonate, and phosphate donated by ATP, constituting the first step of 2 biosynthetic pathways, one leading to arginine and/or urea and the other to pyrimidine nucleotides. The small subunit (glutamine amidotransferase) binds and cleaves glutamine to supply the large subunit with the substrate ammonia. The chain is Carbamoyl phosphate synthase small chain from Buchnera aphidicola subsp. Schizaphis graminum (strain Sg).